We begin with the raw amino-acid sequence, 257 residues long: Putative carboxymethylenebutenolidase (257 aa).

Active-site residues include C148, D195, and H226.

It belongs to the dienelactone hydrolase family.

The catalysed reaction is 2-(5-oxo-2,5-dihydrofuran-2-ylidene)acetate + H2O = 4-oxohex-2-enedioate + H(+). In Saccharolobus solfataricus (strain ATCC 35092 / DSM 1617 / JCM 11322 / P2) (Sulfolobus solfataricus), this protein is Putative carboxymethylenebutenolidase.